The chain runs to 439 residues: tRNA-2-methylthio-N(6)-dimethylallyladenosine synthase (439 aa).

The MTTase N-terminal domain maps to 2–116; that stretch reads LKVYIETMGC…ISQVIHKEKA (115 aa). [4Fe-4S] cluster contacts are provided by Cys11, Cys47, Cys79, Cys149, Cys153, and Cys156. One can recognise a Radical SAM core domain in the interval 135–368; it reads KKAEVRSLLN…QNRHKEILEE (234 aa). The TRAM domain maps to 371 to 437; sequence RLEVGKTHVV…KGRLMATTKN (67 aa).

The protein belongs to the methylthiotransferase family. MiaB subfamily. As to quaternary structure, monomer. The cofactor is [4Fe-4S] cluster.

The protein resides in the cytoplasm. It carries out the reaction N(6)-dimethylallyladenosine(37) in tRNA + (sulfur carrier)-SH + AH2 + 2 S-adenosyl-L-methionine = 2-methylsulfanyl-N(6)-dimethylallyladenosine(37) in tRNA + (sulfur carrier)-H + 5'-deoxyadenosine + L-methionine + A + S-adenosyl-L-homocysteine + 2 H(+). Functionally, catalyzes the methylthiolation of N6-(dimethylallyl)adenosine (i(6)A), leading to the formation of 2-methylthio-N6-(dimethylallyl)adenosine (ms(2)i(6)A) at position 37 in tRNAs that read codons beginning with uridine. The chain is tRNA-2-methylthio-N(6)-dimethylallyladenosine synthase from Helicobacter acinonychis (strain Sheeba).